Consider the following 755-residue polypeptide: DNA ligase 1 (755 aa).

The transit peptide at 1–44 directs the protein to the mitochondrion; it reads MRRLLTGCLLSSARPLKSRLPLLMSSSLPSSAGKKPKQATLARF. R2 is subject to N-acetylserine. Over residues 47–60 the composition is skewed to polar residues; the sequence is SMKNKPTEGTPSPK. 2 disordered regions span residues 47–79 and 97–127; these read SMKN…GEEE and PSSM…QRLV. A phosphoserine mark is found at S58 and S75. Over residues 102-114 the composition is skewed to low complexity; the sequence is SNFSSIPSSAPSS. Phosphoserine occurs at positions 119 and 123. The interval 309–318 is interaction with target DNA; that stretch reads KLRIGLAEKT. E417 serves as a coordination point for ATP. K419 acts as the N6-AMP-lysine intermediate in catalysis. ATP is bound by residues R424 and R440. Mg(2+) is bound at residue E472. Residues 493-495 form an interaction with target DNA region; sequence KRK. Residue E571 coordinates Mg(2+). Positions 576, 590, and 596 each coordinate ATP.

This sequence belongs to the ATP-dependent DNA ligase family. Mg(2+) is required as a cofactor.

The protein localises to the mitochondrion. The protein resides in the nucleus. It catalyses the reaction ATP + (deoxyribonucleotide)n-3'-hydroxyl + 5'-phospho-(deoxyribonucleotide)m = (deoxyribonucleotide)n+m + AMP + diphosphate.. DNA ligase that seals nicks in double-stranded DNA during DNA replication, DNA recombination and DNA repair. The mitochondrial form is required for mitochondrial DNA maintenance but is non-essential while the nuclear form is essential for cell viability. The chain is DNA ligase 1 (CDC9) from Saccharomyces cerevisiae (strain ATCC 204508 / S288c) (Baker's yeast).